A 177-amino-acid chain; its full sequence is Large ribosomal subunit protein uL6 (177 aa).

The protein belongs to the universal ribosomal protein uL6 family. As to quaternary structure, part of the 50S ribosomal subunit.

Its function is as follows. This protein binds to the 23S rRNA, and is important in its secondary structure. It is located near the subunit interface in the base of the L7/L12 stalk, and near the tRNA binding site of the peptidyltransferase center. This is Large ribosomal subunit protein uL6 from Halorhodospira halophila (strain DSM 244 / SL1) (Ectothiorhodospira halophila (strain DSM 244 / SL1)).